The sequence spans 307 residues: 2-dehydropantoate 2-reductase (307 aa).

Residues 7–12 (GSGAMG), Asn-102, and Ala-128 each bind NADP(+). Asn-102 contacts substrate. Catalysis depends on Lys-184, which acts as the Proton donor. 3 residues coordinate substrate: Asn-188, Asn-192, and Ser-255. Glu-268 contributes to the NADP(+) binding site.

The protein belongs to the ketopantoate reductase family.

It localises to the cytoplasm. The catalysed reaction is (R)-pantoate + NADP(+) = 2-dehydropantoate + NADPH + H(+). It participates in cofactor biosynthesis; (R)-pantothenate biosynthesis; (R)-pantoate from 3-methyl-2-oxobutanoate: step 2/2. Its function is as follows. Catalyzes the NADPH-dependent reduction of ketopantoate into pantoic acid. In Streptococcus pyogenes serotype M6 (strain ATCC BAA-946 / MGAS10394), this protein is 2-dehydropantoate 2-reductase (apbA).